Reading from the N-terminus, the 413-residue chain is Endoplasmic reticulum resident protein 44.2 (413 aa).

The first 21 residues, 1-21 (MNLASVLLLLAACHLSVSVNG), serve as a signal peptide directing secretion. The Thioredoxin domain maps to 22 to 136 (QEHKEAIELS…LTNFVKFQLS (115 aa)). Cys-184 and Cys-233 are oxidised to a cystine. N-linked (GlcNAc...) asparagine glycosylation occurs at Asn-264. The interval 367 to 413 (KAARGITDDHEAQAPSTRPIDTTPPPSVFKELKPSDKRYSILQKSEL) is disordered. A compositionally biased stretch (basic and acidic residues) spans 396 to 413 (KELKPSDKRYSILQKSEL). Positions 410 to 413 (KSEL) match the Prevents secretion from ER motif.

It is found in the endoplasmic reticulum lumen. The sequence is that of Endoplasmic reticulum resident protein 44.2 from Caenorhabditis elegans.